Reading from the N-terminus, the 257-residue chain is Imidazole glycerol phosphate synthase subunit HisF (257 aa).

Residues Asp-11 and Asp-130 contribute to the active site.

Belongs to the HisA/HisF family. In terms of assembly, heterodimer of HisH and HisF.

Its subcellular location is the cytoplasm. It carries out the reaction 5-[(5-phospho-1-deoxy-D-ribulos-1-ylimino)methylamino]-1-(5-phospho-beta-D-ribosyl)imidazole-4-carboxamide + L-glutamine = D-erythro-1-(imidazol-4-yl)glycerol 3-phosphate + 5-amino-1-(5-phospho-beta-D-ribosyl)imidazole-4-carboxamide + L-glutamate + H(+). The protein operates within amino-acid biosynthesis; L-histidine biosynthesis; L-histidine from 5-phospho-alpha-D-ribose 1-diphosphate: step 5/9. IGPS catalyzes the conversion of PRFAR and glutamine to IGP, AICAR and glutamate. The HisF subunit catalyzes the cyclization activity that produces IGP and AICAR from PRFAR using the ammonia provided by the HisH subunit. The sequence is that of Imidazole glycerol phosphate synthase subunit HisF from Pseudoalteromonas atlantica (strain T6c / ATCC BAA-1087).